We begin with the raw amino-acid sequence, 831 residues long: Periplasmic nitrate reductase (831 aa).

Positions 1 to 31 (MKLSRRDFMKANAAVAAAAAAGLTIPTVAKA) form a signal peptide, tat-type signal. The 57-residue stretch at 40-96 (IKWDKAPCRFCGTGCGVLVGTQNGRIVASQGDPDSPVNRGLNCVKGYFLPKIMYGKD) folds into the 4Fe-4S Mo/W bis-MGD-type domain. [4Fe-4S] cluster is bound by residues Cys-47, Cys-50, Cys-54, and Cys-82. Mo-bis(molybdopterin guanine dinucleotide) contacts are provided by residues Lys-84, Gln-151, Asn-176, Cys-180, 213–220 (WGSNMAEM), 244–248 (STFEH), 263–265 (QTD), Met-373, Gln-377, Asn-483, 509–510 (SD), Lys-532, Asp-559, and 719–728 (TGRVLEHWHT). Phe-795 is a substrate binding site. The Mo-bis(molybdopterin guanine dinucleotide) site is built by Asn-803 and Lys-820.

The protein belongs to the prokaryotic molybdopterin-containing oxidoreductase family. NasA/NapA/NarB subfamily. Component of the periplasmic nitrate reductase NapAB complex composed of NapA and NapB. The cofactor is [4Fe-4S] cluster. It depends on Mo-bis(molybdopterin guanine dinucleotide) as a cofactor. Predicted to be exported by the Tat system. The position of the signal peptide cleavage has not been experimentally proven.

Its subcellular location is the periplasm. The enzyme catalyses 2 Fe(II)-[cytochrome] + nitrate + 2 H(+) = 2 Fe(III)-[cytochrome] + nitrite + H2O. In terms of biological role, catalytic subunit of the periplasmic nitrate reductase complex NapAB. Receives electrons from NapB and catalyzes the reduction of nitrate to nitrite. The chain is Periplasmic nitrate reductase from Yersinia enterocolitica serotype O:8 / biotype 1B (strain NCTC 13174 / 8081).